Reading from the N-terminus, the 81-residue chain is Protein Vpu (81 aa).

The Extracellular portion of the chain corresponds to 1–7; it reads MQPLVIA. The helical transmembrane segment at 8–28 threads the bilayer; that stretch reads AIVALVVAGIIAIVVWSIVFI. At 29–81 the chain is on the cytoplasmic side; sequence EYRKIRRQRKIDKLIDRISERAEDSGNESEGDQEELSALVGMGHDAPWVINDL. A phosphoserine; by host CK2 mark is found at serine 53 and serine 57.

This sequence belongs to the HIV-1 VPU protein family. In terms of assembly, homopentamer. Interacts with host CD4 and BRTC; these interactions induce proteasomal degradation of CD4. Interacts with host BST2; this interaction leads to the degradation of host BST2. Interacts with host FBXW11. Interacts with host AP1M1; this interaction plays a role in the mistrafficking and subsequent degradation of host BST2. Interacts with host RANBP2; this interaction allows Vpu to down-regulate host BLM sumoylation. Post-translationally, phosphorylated by host CK2. This phosphorylation is necessary for interaction with human BTRC and degradation of CD4.

Its subcellular location is the host membrane. Ion channel activity is inhibited by hexamethylene amiloride in vitro. Its function is as follows. Enhances virion budding by targeting host CD4 and Tetherin/BST2 to proteasome degradation. Degradation of CD4 prevents any unwanted premature interactions between viral Env and its host receptor CD4 in the endoplasmic reticulum. Degradation of antiretroviral protein Tetherin/BST2 is important for virion budding, as BST2 tethers new viral particles to the host cell membrane. Mechanistically, Vpu bridges either CD4 or BST2 to BTRC, a substrate recognition subunit of the Skp1/Cullin/F-box protein E3 ubiquitin ligase, induces their ubiquitination and subsequent proteasomal degradation. The alteration of the E3 ligase specificity by Vpu seems to promote the degradation of host IKBKB, leading to NF-kappa-B down-regulation and subsequent apoptosis. Acts as a viroporin that forms an oligomeric ion channel in membranes. Modulates the host DNA repair mechanisms to promote degradation of nuclear viral cDNA in cells that are already productively infected in order to suppress immune sensing and proviral hyper-integration (superinfection). Manipulates PML-NBs and modulates SUMOylation of host BLM protein thereby enhancing its DNA-end processing activity toward viral unintegrated linear DNA. Also inhibits RAD52-mediated homologous repair of viral cDNA, preventing the generation of dead-end circular forms of single copies of the long terminal repeat and permitting sustained nucleolytic attack. In Homo sapiens (Human), this protein is Protein Vpu.